Here is a 127-residue protein sequence, read N- to C-terminus: UPF0102 protein SYNAS_23220 (127 aa).

It belongs to the UPF0102 family.

In Syntrophus aciditrophicus (strain SB), this protein is UPF0102 protein SYNAS_23220.